The chain runs to 652 residues: O-fucosyltransferase 15 (652 aa).

Residues 91-111 form a helical; Signal-anchor for type II membrane protein membrane-spanning segment; it reads TAAFVIVLVGFFIFVNWFMLS. Residues N139, N169, and N251 are each glycosylated (N-linked (GlcNAc...) asparagine). 426-428 contributes to the substrate binding site; it reads HLR. N-linked (GlcNAc...) asparagine glycans are attached at residues N464, N546, and N607.

This sequence belongs to the glycosyltransferase GT106 family.

It is found in the membrane. It functions in the pathway glycan metabolism. The chain is O-fucosyltransferase 15 from Arabidopsis thaliana (Mouse-ear cress).